Reading from the N-terminus, the 430-residue chain is Cytochrome P450 monooxygenase FGSG_15680 (430 aa).

C351 serves as a coordination point for heme.

Belongs to the cytochrome P450 family. Heme serves as cofactor.

It functions in the pathway mycotoxin biosynthesis. Its function is as follows. Cytochrome P450 monooxygenase; part of the gene cluster that mediates the biosynthesis of gramillins A and B, bicyclic lipopeptides that induce cell death in maize leaves but not in wheat leaves. The nonribosomal peptide synthetase GRA1 incorporates respectively a glutamic adic (Glu), a leucine (Leu), a serine (Ser), a hydroxyglutamine (HOGln), a 2-amino decanoic acid, and 2 cysteins (CysB and CysA). The biosynthesis of 2-amino decanoic acid incorporated in gramillins could be initiated by a fatty acid synthase composed of the alpha and beta subunits FGSG_00036 and FGSG_11656. The cytochrome P450 monooxygenase FGSG_15680 could hydroxylate the fatty acid chain. Subsequent oxidation to the ketone by the oxidoreductase FGSG_00048 and transamination by aminotransferase FGSG_00049 could form 2-amino-decanoic acid. On the other hand, FGSG_15680 could also be responsible for the HO-modified glutamine at the gamma-position. Whether hydroxylation occurs on the fully assembled product or on the Gln residue prior to assembly into the gramillins requires further proof. The thioredoxin FGSG_00043 could also be required for the disulfide-bond formation between CysA and CysB. The specific involvement of the remaining proteins from the cluster is more difficult to discern, but could have broader regulatory (FGSG_00040 and FGSG_11657) or enzymatic functions (FGSG_00044 and FGSG_00045). The final C-domain of GRA1 does not possess the expected sequence of a termination CT domain, often implicated in macrocyclization and release of a cyclopeptidein fungal NRPs; and the thioesterase FGSG_00047 may act in concert with the terminal C-domain of GRA1 to catalyze the formation of the macrocyclic anhydride and release of the products. The sequence is that of Cytochrome P450 monooxygenase FGSG_15680 from Gibberella zeae (strain ATCC MYA-4620 / CBS 123657 / FGSC 9075 / NRRL 31084 / PH-1) (Wheat head blight fungus).